A 250-amino-acid polypeptide reads, in one-letter code: Beta-crystallin B1 (250 aa).

Positions 1–13 (MSQAAKASATTAV) are enriched in polar residues. The tract at residues 1 to 49 (MSQAAKASATTAVNPGPDGKGKGAPSTGPAPAPGPTPVPASVPRPAAKV) is disordered. Ser2 is subject to N-acetylserine. An N-terminal arm region spans residues 2 to 56 (SQAAKASATTAVNPGPDGKGKGAPSTGPAPAPGPTPVPASVPRPAAKVGDLPPGS). The segment covering 28 to 42 (GPAPAPGPTPVPASV) has biased composition (pro residues). Beta/gamma crystallin 'Greek key' domains are found at residues 57–96 (YRLIVFEQENFQGRRVEFSGECLNLGDRGFDRVRSLIVVS) and 97–141 (GPWV…RPIR). The segment at 142–146 (MDSQE) is connecting peptide. Beta/gamma crystallin 'Greek key' domains lie at 147–188 (HKIC…TVSG) and 189–231 (GTWV…RRLR). The interval 233 to 250 (RQWHQEGCFPVLTAEPPK) is C-terminal arm.

The protein belongs to the beta/gamma-crystallin family. Homo/heterodimer, or complexes of higher-order. The structure of beta-crystallin oligomers seems to be stabilized through interactions between the N-terminal arms. Specific cleavages in the N-terminal arm occur during lens maturation and give rise to truncated forms, leading to impaired oligomerization and protein insolubilization. The protease responsible for this partial degradation could be calpain II.

In terms of biological role, crystallins are the dominant structural components of the vertebrate eye lens. This Mus musculus (Mouse) protein is Beta-crystallin B1 (Crybb1).